Consider the following 1081-residue polypeptide: SPX and EXS domain-containing protein 4 (1081 aa).

In terms of domain architecture, SPX spans 1-483; it reads MKFRDLLNDH…RIISSECRKY (483 aa). Disordered regions lie at residues 86-118, 160-271, and 318-354; these read ETAD…SVGF, QRNN…HDKN, and VKGD…DEDN. 3 stretches are compositionally biased toward low complexity: residues 90–110, 161–196, and 211–228; these read SPAI…NNNN, RNNN…TRNI, and SPFS…SPSP. Over residues 244-264 the composition is skewed to acidic residues; that stretch reads KDEDEEEEGEEEEDIEMEQLE. Basic and acidic residues predominate over residues 319–336; sequence KGDKSNDKNNDKSNDKNN. Residues 337–349 are compositionally biased toward low complexity; that stretch reads NKNNKNNNNNNNL. A run of 9 helical transmembrane segments spans residues 536–556, 573–593, 622–642, 654–674, 703–723, 776–796, 803–823, 854–874, and 887–907; these read NLFT…QVVF, LAWL…MFSL, YLKY…LYID, ILIP…PFPI, FFMS…QSMV, ITSA…YIAL, WSII…YKFY, WIYY…LIIF, and PLFL…FIFF. The region spanning 738–940 is the EXS domain; it reads FCSQSRFFAL…SQEYNNYMDE (203 aa). Residues 939 to 1031 form a disordered region; that stretch reads DEKKKRRKRK…INDHMNPDTG (93 aa). The span at 942–951 shows a compositional bias: basic residues; that stretch reads KKRRKRKQKQ. A compositionally biased stretch (low complexity) spans 952-970; that stretch reads SKSNNNNNNNNNNNNNNNN. The span at 977 to 1003 shows a compositional bias: polar residues; the sequence is SSNNVETDETITSSNNTDSSHQKQPLT. The segment covering 1013–1022 has biased composition (basic and acidic residues); the sequence is NHQDHHDLSI.

It belongs to the SYG1 (TC 2.A.94) family.

Its subcellular location is the membrane. This is SPX and EXS domain-containing protein 4 from Dictyostelium discoideum (Social amoeba).